We begin with the raw amino-acid sequence, 307 residues long: Myeloid-associated differentiation marker-like protein 2 (307 aa).

2 consecutive MARVEL domains span residues 17 to 154 (AVTS…ARPG) and 159 to 303 (YMAT…RIRF). The next 7 helical transmembrane spans lie at 53–73 (FCMA…ACEF), 90–110 (AFAM…PLYF), 129–149 (LAAS…VALT), 163–183 (VSGL…GALV), 198–218 (VAVY…SVMG), 232–252 (IVYT…WPVF), and 278–298 (LVVA…LAYS).

The protein belongs to the MAL family.

It is found in the membrane. The chain is Myeloid-associated differentiation marker-like protein 2 (Myadml2) from Mus musculus (Mouse).